We begin with the raw amino-acid sequence, 301 residues long: Protein FdhE homolog (301 aa).

It belongs to the FdhE family.

Its subcellular location is the cytoplasm. Its function is as follows. Necessary for formate dehydrogenase activity. This chain is Protein FdhE homolog, found in Shewanella baltica (strain OS223).